A 156-amino-acid polypeptide reads, in one-letter code: Small ribosomal subunit protein uS15 (156 aa).

The tract at residues 1-67 (MARMHTRRRG…GVQGTPIPDV (67 aa)) is disordered. Over residues 10-19 (GSSDSDKPAA) the composition is skewed to basic and acidic residues. The span at 21–32 (EPPEWSDVDEDA) shows a compositional bias: acidic residues.

Belongs to the universal ribosomal protein uS15 family. In terms of assembly, part of the 30S ribosomal subunit.

This chain is Small ribosomal subunit protein uS15, found in Haloarcula marismortui (strain ATCC 43049 / DSM 3752 / JCM 8966 / VKM B-1809) (Halobacterium marismortui).